A 301-amino-acid polypeptide reads, in one-letter code: MKVVFMGSSEFSLPAFEALVSADSYDVVAVYTKAPKPAGRGYALTKTPVHICAEGKGIPVRSPVSLRAEGEESIMAEYAPDVIVVVSYGLMLPKWTLTASRMGCVNIHPSLLPRWRGAAPMQHAILSGDTVTGVTIMQINEFMDAGDIYLQEVTEIGEKENILDLSRRLSVMGSRMLLKVLDSIGSIQPIKQDESGVTIANKLEEFRIDFEEAADVICRRIRALYPKMYFMLDGSRVRVLEAESYEFAEMNIGDVINNELHIRCGGNTALVPLVVQQESKKPCDIKSFLCRFRGKSMPVVS.

110-113 (SLLP) contacts (6S)-5,6,7,8-tetrahydrofolate.

This sequence belongs to the Fmt family.

The catalysed reaction is L-methionyl-tRNA(fMet) + (6R)-10-formyltetrahydrofolate = N-formyl-L-methionyl-tRNA(fMet) + (6S)-5,6,7,8-tetrahydrofolate + H(+). Attaches a formyl group to the free amino group of methionyl-tRNA(fMet). The formyl group appears to play a dual role in the initiator identity of N-formylmethionyl-tRNA by promoting its recognition by IF2 and preventing the misappropriation of this tRNA by the elongation apparatus. The sequence is that of Methionyl-tRNA formyltransferase from Anaplasma phagocytophilum (strain HZ).